The following is a 264-amino-acid chain: tRNA-uridine aminocarboxypropyltransferase A (264 aa).

Residues Cys-25, Cys-28, Cys-35, and Cys-37 each contribute to the Zn(2+) site. Residues 144–147 carry the DXTW motif; sequence DATW. The segment at 245-264 is disordered; that stretch reads RPKLLKKRFQNQQPLEQEEE. The span at 254–264 shows a compositional bias: polar residues; it reads QNQQPLEQEEE.

The protein belongs to the TDD superfamily. DTWD2 family.

The catalysed reaction is a uridine in tRNA + S-adenosyl-L-methionine = a 3-[(3S)-3-amino-3-carboxypropyl]uridine in tRNA + S-methyl-5'-thioadenosine + H(+). Its function is as follows. Catalyzes the formation of 3-(3-amino-3-carboxypropyl)uridine (acp3U) at position 20a in the D-loop of several cytoplasmic tRNAs (acp3U(20a)). The polypeptide is tRNA-uridine aminocarboxypropyltransferase A (Arabidopsis thaliana (Mouse-ear cress)).